Reading from the N-terminus, the 470-residue chain is ATP synthase subunit beta (470 aa).

Gly156 to Thr163 serves as a coordination point for ATP.

It belongs to the ATPase alpha/beta chains family. As to quaternary structure, F-type ATPases have 2 components, CF(1) - the catalytic core - and CF(0) - the membrane proton channel. CF(1) has five subunits: alpha(3), beta(3), gamma(1), delta(1), epsilon(1). CF(0) has three main subunits: a(1), b(2) and c(9-12). The alpha and beta chains form an alternating ring which encloses part of the gamma chain. CF(1) is attached to CF(0) by a central stalk formed by the gamma and epsilon chains, while a peripheral stalk is formed by the delta and b chains.

It localises to the cell inner membrane. It carries out the reaction ATP + H2O + 4 H(+)(in) = ADP + phosphate + 5 H(+)(out). Produces ATP from ADP in the presence of a proton gradient across the membrane. The catalytic sites are hosted primarily by the beta subunits. In Thermosipho africanus (strain TCF52B), this protein is ATP synthase subunit beta.